The following is a 388-amino-acid chain: MRYLTAGESHGPQLTAILEGVPAGLELRAEHINKELARRQKGYGRGRRMQIEKDEVKIVGGVRHGKTLGSPIALVVENRDFQHWQTIMAVEPIDDETEVKRKVTRPRPGHADLNGALKYGHRDMRNVLERSSARETTVRVAAGAVAKRLLEEVGIRVAGHVLEIGGVRAEKLDYRSLDELQKVTEESPVRCFDPEAGQKMMEAIDLAKKNGDSIGGIVEVIVEGVPAGVGSYVHYDRKLDAKIAAAIVSINAFKGVEFGIGFEAARRPGSEVHDEIIWSPEQGFSRRTNRAGGFEGGMTTGMPIVVRGVMKPIPTLYKPLGSVDIDTKEPFTASIERSDSCAVPAASVVAEAVVAWEVAAAIVEQFGQDRIDLIKENIERARRYAREF.

Positions 39 and 45 each coordinate NADP(+). Residues 130–132, 251–252, Gly-296, 311–315, and Arg-337 contribute to the FMN site; these read RSS, NA, and KPIPT.

Belongs to the chorismate synthase family. In terms of assembly, homotetramer. It depends on FMNH2 as a cofactor.

The catalysed reaction is 5-O-(1-carboxyvinyl)-3-phosphoshikimate = chorismate + phosphate. The protein operates within metabolic intermediate biosynthesis; chorismate biosynthesis; chorismate from D-erythrose 4-phosphate and phosphoenolpyruvate: step 7/7. Catalyzes the anti-1,4-elimination of the C-3 phosphate and the C-6 proR hydrogen from 5-enolpyruvylshikimate-3-phosphate (EPSP) to yield chorismate, which is the branch point compound that serves as the starting substrate for the three terminal pathways of aromatic amino acid biosynthesis. This reaction introduces a second double bond into the aromatic ring system. The chain is Chorismate synthase from Geobacillus thermodenitrificans (strain NG80-2).